The following is a 298-amino-acid chain: Ethanolamine ammonia-lyase small subunit (298 aa).

Residues 15–43 (ASMGQDVPQPVAPSTQEGAKPQRAAPTAT) are disordered. Adenosylcob(III)alamin contacts are provided by valine 210, glutamate 231, and cysteine 261.

Belongs to the EutC family. As to quaternary structure, the basic unit is a heterodimer which dimerizes to form tetramers. The heterotetramers trimerize; 6 large subunits form a core ring with 6 small subunits projecting outwards. Adenosylcob(III)alamin is required as a cofactor.

The protein localises to the bacterial microcompartment. The catalysed reaction is ethanolamine = acetaldehyde + NH4(+). Its pathway is amine and polyamine degradation; ethanolamine degradation. Its function is as follows. Catalyzes the deamination of various vicinal amino-alcohols to oxo compounds. Allows this organism to utilize ethanolamine as the sole source of nitrogen and carbon in the presence of external vitamin B12. The polypeptide is Ethanolamine ammonia-lyase small subunit (Salmonella arizonae (strain ATCC BAA-731 / CDC346-86 / RSK2980)).